The following is a 756-amino-acid chain: 5-methyltetrahydropteroyltriglutamate--homocysteine methyltransferase (756 aa).

5-methyltetrahydropteroyltri-L-glutamate-binding positions include 16–19 and K116; that span reads RELK. Residues 433–435 and E486 contribute to the L-homocysteine site; that span reads IGS. L-methionine-binding positions include 433–435 and E486; that span reads IGS. 5-methyltetrahydropteroyltri-L-glutamate contacts are provided by residues 517 to 518 and W563; that span reads RC. D601 is an L-homocysteine binding site. Residue D601 coordinates L-methionine. E607 is a 5-methyltetrahydropteroyltri-L-glutamate binding site. Residues H643, C645, and E667 each contribute to the Zn(2+) site. H696 serves as the catalytic Proton donor. C728 lines the Zn(2+) pocket.

It belongs to the vitamin-B12 independent methionine synthase family. Zn(2+) serves as cofactor.

The catalysed reaction is 5-methyltetrahydropteroyltri-L-glutamate + L-homocysteine = tetrahydropteroyltri-L-glutamate + L-methionine. Its pathway is amino-acid biosynthesis; L-methionine biosynthesis via de novo pathway; L-methionine from L-homocysteine (MetE route): step 1/1. In terms of biological role, catalyzes the transfer of a methyl group from 5-methyltetrahydrofolate to homocysteine resulting in methionine formation. The polypeptide is 5-methyltetrahydropteroyltriglutamate--homocysteine methyltransferase (Buchnera aphidicola subsp. Baizongia pistaciae (strain Bp)).